A 257-amino-acid polypeptide reads, in one-letter code: MLTLLSPAKKLLSISKHYSKKTSNPLLLDKALELVKIMKLKSAEQIADLMDLSRQLAELNYERYQNFDLKNNPMNHSYPALFLFQGDVYQGLNANSWKDEEIEYAQSHLGILSGLYGFLRPLDRIQPYRLEMGVKLENPAGKNLYAFWSKIVTNILNQILAEQSNPVLINLASTEYFKVVDEKKLSYPLVTINFYEQKNSELKMIGILAKKARGMMAKYIMQNRIDSIEQIKEFSESGYLFNKEISSPNSLNFIRIH.

The protein belongs to the UPF0246 family.

The protein is UPF0246 protein lpl1317 of Legionella pneumophila (strain Lens).